Reading from the N-terminus, the 541-residue chain is 2-succinyl-5-enolpyruvyl-6-hydroxy-3-cyclohexene-1-carboxylate synthase (541 aa).

This sequence belongs to the TPP enzyme family. MenD subfamily. In terms of assembly, homodimer. The cofactor is Mg(2+). Mn(2+) serves as cofactor. Thiamine diphosphate is required as a cofactor.

The enzyme catalyses isochorismate + 2-oxoglutarate + H(+) = 5-enolpyruvoyl-6-hydroxy-2-succinyl-cyclohex-3-ene-1-carboxylate + CO2. It functions in the pathway quinol/quinone metabolism; 1,4-dihydroxy-2-naphthoate biosynthesis; 1,4-dihydroxy-2-naphthoate from chorismate: step 2/7. Its pathway is quinol/quinone metabolism; menaquinone biosynthesis. Functionally, catalyzes the thiamine diphosphate-dependent decarboxylation of 2-oxoglutarate and the subsequent addition of the resulting succinic semialdehyde-thiamine pyrophosphate anion to isochorismate to yield 2-succinyl-5-enolpyruvyl-6-hydroxy-3-cyclohexene-1-carboxylate (SEPHCHC). The sequence is that of 2-succinyl-5-enolpyruvyl-6-hydroxy-3-cyclohexene-1-carboxylate synthase from Leuconostoc mesenteroides subsp. mesenteroides (strain ATCC 8293 / DSM 20343 / BCRC 11652 / CCM 1803 / JCM 6124 / NCDO 523 / NBRC 100496 / NCIMB 8023 / NCTC 12954 / NRRL B-1118 / 37Y).